A 319-amino-acid chain; its full sequence is Ribosomal RNA large subunit methyltransferase F (319 aa).

A disordered region spans residues 1-25 (MAPFFSAMTSKKQSQGLPKGPHPDN). Polar residues predominate over residues 7 to 16 (AMTSKKQSQG).

It belongs to the methyltransferase superfamily. METTL16/RlmF family.

The protein resides in the cytoplasm. It catalyses the reaction adenosine(1618) in 23S rRNA + S-adenosyl-L-methionine = N(6)-methyladenosine(1618) in 23S rRNA + S-adenosyl-L-homocysteine + H(+). In terms of biological role, specifically methylates the adenine in position 1618 of 23S rRNA. The chain is Ribosomal RNA large subunit methyltransferase F from Shewanella amazonensis (strain ATCC BAA-1098 / SB2B).